We begin with the raw amino-acid sequence, 369 residues long: MSGNTLGTLFTVTTFGESHGPAIGCVIDGCPPGMALTEADVQLELDRRKPGTSRHVTQRQEPDQVEILSGVFEGVTTGAPIALLIRNTDQRSKDYGNIAETFRPGHADYTYWQKYGVRDYRGGGRSSARLTAPVVGAGAIAKKWLRERFGVEVRGYMSALGEIEIPFVDWSHVRENPFFAPNADIVPQLEDYMDALRKDGDSIGARIDVVASGVPVGWGEPLFDRLDADIAHAMMGINAVKGVEIGAGFASVAQRGSVHGDELTPDGFVGNHAGGVLGGISTGQDITVSIAIKPTSSIRTPRRSITRAGEPAVVETFGRHDPCVGIRATPIAESMLALVLIDHALRHRAQCGDVSSATPRIAARAPDAQ.

NADP(+)-binding residues include R48 and R54. FMN is bound by residues 125–127 (RSS), 238–239 (NA), G278, 293–297 (KPTSS), and R319.

The protein belongs to the chorismate synthase family. As to quaternary structure, homotetramer. Requires FMNH2 as cofactor.

The catalysed reaction is 5-O-(1-carboxyvinyl)-3-phosphoshikimate = chorismate + phosphate. It participates in metabolic intermediate biosynthesis; chorismate biosynthesis; chorismate from D-erythrose 4-phosphate and phosphoenolpyruvate: step 7/7. Catalyzes the anti-1,4-elimination of the C-3 phosphate and the C-6 proR hydrogen from 5-enolpyruvylshikimate-3-phosphate (EPSP) to yield chorismate, which is the branch point compound that serves as the starting substrate for the three terminal pathways of aromatic amino acid biosynthesis. This reaction introduces a second double bond into the aromatic ring system. This chain is Chorismate synthase, found in Burkholderia mallei (strain ATCC 23344).